Consider the following 743-residue polypeptide: Extensin-2 (743 aa).

Residues 1-22 (MGPSAHLISALGVIIMATMVAA) form the signal peptide. The disordered stretch occupies residues 46 to 93 (TPPLPYVDSSPPPTYTPAPEVEYKSPPPPYVYSSPPPPTYSPSPKVDY). Pro residues-rich tracts occupy residues 47-61 (PPLP…PTYT) and 70-86 (SPPP…PTYS). Tandem repeats lie at residues 70 to 78 (SPPPPYVYS), 79 to 94 (SPPP…VDYK), 95 to 103 (SPPPPYVYS), 104 to 119 (SPPP…VDYK), 120 to 128 (SPPPPYVYN), 129 to 144 (SPPP…VDYK), 145 to 153 (SPPPPYVYS), 154 to 169 (SPPP…VEYK), 170 to 178 (SPPPPYVYS), 179 to 194 (SPPP…VDYK), 195 to 203 (SPPPPYVYS), 204 to 219 (SPPP…VEYK), 220 to 228 (SPPPPYVYS), 229 to 244 (SPPP…VDYK), 245 to 253 (SPPPPYVYS), 254 to 269 (SPPP…VDYK), 270 to 278 (SPPPPYVYS), 279 to 294 (SPPP…VDYK), 295 to 303 (SPPPPYVYS), 304 to 319 (SPPP…VDYK), 320 to 328 (SPPPPYVYS), 329 to 344 (SPPP…VDYK), 345 to 353 (SPPPPYVYS), 354 to 369 (SPPP…VDYK), 370 to 378 (SPPPPYVYS), 379 to 394 (SPPP…VEYK), 395 to 403 (SPPPPYVYS), 404 to 419 (SPPP…VYYK), 420 to 428 (SPPPPYVYS), 429 to 444 (SPPP…VYYK), 445 to 453 (SPPPPYVYS), 454 to 469 (SPPP…VYYK), 470 to 478 (SPPPPYVYS), 479 to 494 (SPPP…VYYK), 495 to 503 (SPPPPYVYS), 504 to 519 (SPPP…VYYK), 520 to 528 (SPPPPYVYS), 529 to 544 (SPPP…VHYK), 545 to 553 (SPPPPYVYS), 554 to 569 (SPPP…VHYK), 570 to 578 (SPPPPYVYN), 579 to 594 (SPPP…VYYK), 595 to 603 (SPPPPYVYS), 604 to 619 (SPPP…VYYK), 620 to 628 (SPPPPYVYS), 629 to 644 (SPPP…VYYK), and 645 to 660 (SPPP…VYYK). A 23 X 9 AA repeats of S-P-P-P-P-Y-V-Y-[SN] region spans residues 70–628 (SPPPPYVYSS…KSPPPPYVYS (559 aa)). The tract at residues 79-660 (SPPPPTYSPS…YSPSPKVYYK (582 aa)) is 24 X 16 AA repeats of S-P-P-P-P-[YT]-Y-S-P-S-P-K-V-[DEYH]-Y-K. Positions 715–743 (PPSYYSPSPKVEYKSPPPPSYSPSPKTEY) are disordered.

The protein belongs to the extensin family. In terms of processing, extensins contain a characteristic repeat of the pentapeptide Ser-Pro(4). The proline residues are hydroxylated and then O-glycosylated (arabinosylation). Synthetised as soluble proteins which become insolubilised in the cell wall through the intermolecular cross-linking of Tyr on adjacent monomers. Isodityrosine (IDT) stabilizes and makes rigid the part of the polypeptide where IDT functional sites are present. In terms of tissue distribution, predominantly expressed in the roots.

It localises to the secreted. The protein localises to the primary cell wall. Its function is as follows. Structural component which strengthens the primary cell wall. This Arabidopsis thaliana (Mouse-ear cress) protein is Extensin-2.